Consider the following 309-residue polypeptide: UDP-N-acetylenolpyruvoylglucosamine reductase (309 aa).

The FAD-binding PCMH-type domain occupies 40–204 (LGGKVPLFAI…LQATFKLKKG (165 aa)). The active site involves Arg-182. Ser-233 acts as the Proton donor in catalysis. Glu-304 is a catalytic residue.

Belongs to the MurB family. FAD is required as a cofactor.

Its subcellular location is the cytoplasm. It catalyses the reaction UDP-N-acetyl-alpha-D-muramate + NADP(+) = UDP-N-acetyl-3-O-(1-carboxyvinyl)-alpha-D-glucosamine + NADPH + H(+). Its pathway is cell wall biogenesis; peptidoglycan biosynthesis. Its function is as follows. Cell wall formation. The protein is UDP-N-acetylenolpyruvoylglucosamine reductase of Fervidobacterium nodosum (strain ATCC 35602 / DSM 5306 / Rt17-B1).